Consider the following 215-residue polypeptide: MEKAIVLLSAGLDSTVSLAYGVRNFQVVLGLTFNYGQKASRKEIEHSKKILDYYGIPQEVIELPFLKKITKTSLVAEDQEIPTGIDLESAAAVKTSMEKVWVPNRNGLFINIAAAYAESLGAKYIITGFNAEEAKTFSDNSREFVDAVNHALKYSTLNHVQVVSFTQNLEKSEIYRLGVELGAPLDLIWSCYYGGDEMCGVCESCLRLKRARGGN.

8–18 (LSAGLDSTVSL) is a binding site for ATP. Residues C191, C199, C202, and C205 each coordinate Zn(2+).

Belongs to the QueC family. As to quaternary structure, homodimer. Requires Zn(2+) as cofactor.

It catalyses the reaction 7-carboxy-7-deazaguanine + NH4(+) + ATP = 7-cyano-7-deazaguanine + ADP + phosphate + H2O + H(+). The protein operates within purine metabolism; 7-cyano-7-deazaguanine biosynthesis. In terms of biological role, catalyzes the ATP-dependent conversion of 7-carboxy-7-deazaguanine (CDG) to 7-cyano-7-deazaguanine (preQ(0)). In Carboxydothermus hydrogenoformans (strain ATCC BAA-161 / DSM 6008 / Z-2901), this protein is 7-cyano-7-deazaguanine synthase.